The sequence spans 296 residues: MRINHPLTGSIVALITPMFDDGSIDFGVLKSLVAFHIDSGTKAIVSMGTTGESATLNQDEHIEVIRATIEFANSRIPIIASTGANSTSEAIELTKAAKVIGADACLLVTPYYNRPTQEGLYQHYKLIAETVDIDQILYNVPSRTAVDLCVETVLRLSNIDNIIGIKDATGDLNVAKALIEQCADDFLFYSGDDATAVEFILMGGHGGISVTANITPKQVASAYQFALENDRELAESTNAPLADLHQHLFIESNPIPIKWAMFKMGKCNNGIRLPLMILSQQAQAMLEQDLSNLGII.

Thr50 lines the pyruvate pocket. The Proton donor/acceptor role is filled by Tyr138. Lys166 (schiff-base intermediate with substrate) is an active-site residue. Ile208 is a pyruvate binding site.

It belongs to the DapA family. Homotetramer; dimer of dimers.

It localises to the cytoplasm. The enzyme catalyses L-aspartate 4-semialdehyde + pyruvate = (2S,4S)-4-hydroxy-2,3,4,5-tetrahydrodipicolinate + H2O + H(+). Its pathway is amino-acid biosynthesis; L-lysine biosynthesis via DAP pathway; (S)-tetrahydrodipicolinate from L-aspartate: step 3/4. In terms of biological role, catalyzes the condensation of (S)-aspartate-beta-semialdehyde [(S)-ASA] and pyruvate to 4-hydroxy-tetrahydrodipicolinate (HTPA). This Ruthia magnifica subsp. Calyptogena magnifica protein is 4-hydroxy-tetrahydrodipicolinate synthase.